We begin with the raw amino-acid sequence, 219 residues long: Phosphatidylserine decarboxylase proenzyme (219 aa).

Residue S188 is the Schiff-base intermediate with substrate; via pyruvic acid of the active site. A Pyruvic acid (Ser); by autocatalysis modification is found at S188.

This sequence belongs to the phosphatidylserine decarboxylase family. PSD-A subfamily. As to quaternary structure, heterodimer of a large membrane-associated beta subunit and a small pyruvoyl-containing alpha subunit. Pyruvate is required as a cofactor. In terms of processing, is synthesized initially as an inactive proenzyme. Formation of the active enzyme involves a self-maturation process in which the active site pyruvoyl group is generated from an internal serine residue via an autocatalytic post-translational modification. Two non-identical subunits are generated from the proenzyme in this reaction, and the pyruvate is formed at the N-terminus of the alpha chain, which is derived from the carboxyl end of the proenzyme. The post-translation cleavage follows an unusual pathway, termed non-hydrolytic serinolysis, in which the side chain hydroxyl group of the serine supplies its oxygen atom to form the C-terminus of the beta chain, while the remainder of the serine residue undergoes an oxidative deamination to produce ammonia and the pyruvoyl prosthetic group on the alpha chain.

It localises to the cell membrane. It catalyses the reaction a 1,2-diacyl-sn-glycero-3-phospho-L-serine + H(+) = a 1,2-diacyl-sn-glycero-3-phosphoethanolamine + CO2. The protein operates within phospholipid metabolism; phosphatidylethanolamine biosynthesis; phosphatidylethanolamine from CDP-diacylglycerol: step 2/2. Catalyzes the formation of phosphatidylethanolamine (PtdEtn) from phosphatidylserine (PtdSer). In Geobacter sp. (strain M21), this protein is Phosphatidylserine decarboxylase proenzyme.